Reading from the N-terminus, the 348-residue chain is Phosphate acyltransferase (348 aa).

The protein belongs to the PlsX family. As to quaternary structure, homodimer. Probably interacts with PlsY.

It localises to the cytoplasm. It carries out the reaction a fatty acyl-[ACP] + phosphate = an acyl phosphate + holo-[ACP]. It participates in lipid metabolism; phospholipid metabolism. Its function is as follows. Catalyzes the reversible formation of acyl-phosphate (acyl-PO(4)) from acyl-[acyl-carrier-protein] (acyl-ACP). This enzyme utilizes acyl-ACP as fatty acyl donor, but not acyl-CoA. This is Phosphate acyltransferase from Pectobacterium carotovorum subsp. carotovorum (strain PC1).